Here is a 348-residue protein sequence, read N- to C-terminus: Selenide, water dikinase (348 aa).

Residue C17 is part of the active site. ATP is bound by residues K20 and 48–50 (TSD). Position 51 (D51) interacts with Mg(2+). ATP-binding positions include D68, D91, and 139–141 (GHT). D91 serves as a coordination point for Mg(2+). Residue D227 participates in Mg(2+) binding.

It belongs to the selenophosphate synthase 1 family. Class I subfamily. In terms of assembly, homodimer. Mg(2+) is required as a cofactor.

The enzyme catalyses hydrogenselenide + ATP + H2O = selenophosphate + AMP + phosphate + 2 H(+). In terms of biological role, synthesizes selenophosphate from selenide and ATP. The protein is Selenide, water dikinase of Dechloromonas aromatica (strain RCB).